The primary structure comprises 360 residues: G-protein coupled receptor 183 (360 aa).

Over 1–30 (MDIKMDNFTTPSAASLESDCDLYAHHHTAR) the chain is Extracellular. Asparagine 7 is a glycosylation site (N-linked (GlcNAc...) asparagine). Residues 31–56 (ILMPLHYSIVFIIGLVGNLLALIVII) form a helical membrane-spanning segment. The Cytoplasmic segment spans residues 57-76 (QNRKKINSTTLYSTNLVISD). The helical transmembrane segment at 77-94 (ILFTTALPTRIAYYALGF) threads the bilayer. Arginine 86 contacts 7alpha,25-dihydroxycholesterol. Topologically, residues 95–104 (DWRIGDALCR) are extracellular. A disulfide bridge connects residues cysteine 103 and cysteine 180. Residues 105-126 (ITALVFYINTYAGVNFMTCLSI) form a helical membrane-spanning segment. Residues tyrosine 111 and tyrosine 115 each contribute to the 7alpha,25-dihydroxycholesterol site. Residues 125-133 (SIDRFFAVV) form an interaction with G proteins region. At 127–148 (DRFFAVVHPLRYNKIKRIEHAK) the chain is on the cytoplasmic side. The helical transmembrane segment at 149 to 167 (CICIFVWILVFGQTLPLLI) threads the bilayer. At 168-191 (NPMSKQEAERTTCMEYPNFEETKS) the chain is on the extracellular side. The helical transmembrane segment at 192–214 (LPWILLGACFIGYVLPLVIILIC) threads the bilayer. At 215-240 (YSQICCKLFKTAKQNPLTEKSGVNKK) the chain is on the cytoplasmic side. The chain crosses the membrane as a helical span at residues 241 to 264 (ALNTIIFIIVVFVVCFTPYHVAII). Tyrosine 259 lines the 7alpha,25-dihydroxycholesterol pocket. Residues 265 to 286 (QHMIKKLRLPGLLECSQRHSFQ) lie on the Extracellular side of the membrane. A helical membrane pass occupies residues 287–311 (ISLHFTVCLMNFNCCMDPFIYFFAC). Over 312–360 (KGYKRKVMKMLKRQVSVSISSAVRSAPEENSREMTETQMMIHSKSLNGK) the chain is Cytoplasmic. A Phosphoserine modification is found at serine 327. The segment at 339–360 (EENSREMTETQMMIHSKSLNGK) is disordered. Positions 347 to 360 (ETQMMIHSKSLNGK) are enriched in polar residues.

The protein belongs to the G-protein coupled receptor 1 family. As to quaternary structure, homodimer and heterodimer. Heterodimerizes with CXCR5; leading to modulate the interaction between of CXCL13 and CXCR5.

Its subcellular location is the cell membrane. In terms of biological role, G-protein coupled receptor expressed in lymphocytes that acts as a chemotactic receptor for B-cells, T-cells, splenic dendritic cells, monocytes/macrophages and astrocytes. Receptor for oxysterol 7-alpha,25-dihydroxycholesterol (7-alpha,25-OHC) and other related oxysterols. Mediates cell positioning and movement of a number of cells by binding the 7-alpha,25-OHC ligand that forms a chemotactic gradient. Binding of 7-alpha,25-OHC mediates the correct localization of B-cells during humoral immune responses. Guides B-cell movement along the B-cell zone-T-cell zone boundary and later to interfollicular and outer follicular regions. Its specific expression during B-cell maturation helps position B-cells appropriately for mounting T-dependent antibody responses. Collaborates with CXCR5 to mediate B-cell migration; probably by forming a heterodimer with CXCR5 that affects the interaction between of CXCL13 and CXCR5. Also acts as a chemotactic receptor for some T-cells upon binding to 7-alpha,25-OHC ligand. Promotes follicular helper T (Tfh) cells differentiation by positioning activated T-cells at the follicle-T-zone interface, promoting contact of newly activated CD4 T-cells with activated dendritic cells and exposing them to Tfh-cell-promoting inducible costimulator (ICOS) ligand. Expression in splenic dendritic cells is required for their homeostasis, localization and ability to induce B- and T-cell responses: GPR183 acts as a chemotactic receptor in dendritic cells that mediates the accumulation of CD4(+) dendritic cells in bridging channels. Regulates migration of astrocytes and is involved in communication between astrocytes and macrophages. Promotes osteoclast precursor migration to bone surfaces. Signals constitutively through G(i)-alpha, but not G(s)-alpha or G(q)-alpha. Signals constitutively also via MAPK1/3 (ERK1/2). This is G-protein coupled receptor 183 (GPR183) from Bos taurus (Bovine).